The following is a 218-amino-acid chain: MANQEIFDKLTNAIVTQDIAGCAKLTQEALDAGISPLDIITKGLSPGMKIIGDKFEAAEIFLPQIMMSGKAMSSAMEILTPELEKTKVEGEEGTGLAITFVAEGDIHDIGHRLVTTMLGANGFDILDLGVDVLNETVIEEAAKRKGQKIILVGSALMTTSMLGQKDLMDRLREENLRDSVKCMFGGAPVSDKWIDEIGADATAENAAEAAKVALNIMK.

Residues 1–91 enclose the B12-binding N-terminal domain; that stretch reads MANQEIFDKL…ELEKTKVEGE (91 aa). The B12-binding domain maps to 94–218; it reads TGLAITFVAE…AAKVALNIMK (125 aa). His-107 serves as a coordination point for methylcob(III)alamin.

Belongs to the methylamine corrinoid protein family. Can form a complex with MtmB.

It functions in the pathway one-carbon metabolism; methanogenesis from methylamine. In terms of biological role, acts as a methyl group carrier between MtmB and MtbA. The chain is Monomethylamine corrinoid protein 1 (mtmC1) from Methanosarcina mazei (strain ATCC BAA-159 / DSM 3647 / Goe1 / Go1 / JCM 11833 / OCM 88) (Methanosarcina frisia).